The sequence spans 930 residues: Isoleucine--tRNA ligase (930 aa).

The 'HIGH' region motif lies at 57 to 67 (PYANGNIHVGH). Residue E554 coordinates L-isoleucyl-5'-AMP. The 'KMSKS' region signature appears at 595-599 (KMSKS). K598 is a binding site for ATP.

The protein belongs to the class-I aminoacyl-tRNA synthetase family. IleS type 1 subfamily. Monomer.

Its subcellular location is the cytoplasm. The enzyme catalyses tRNA(Ile) + L-isoleucine + ATP = L-isoleucyl-tRNA(Ile) + AMP + diphosphate. Catalyzes the attachment of isoleucine to tRNA(Ile). As IleRS can inadvertently accommodate and process structurally similar amino acids such as valine, to avoid such errors it has two additional distinct tRNA(Ile)-dependent editing activities. One activity is designated as 'pretransfer' editing and involves the hydrolysis of activated Val-AMP. The other activity is designated 'posttransfer' editing and involves deacylation of mischarged Val-tRNA(Ile). This Streptococcus agalactiae serotype III (strain NEM316) protein is Isoleucine--tRNA ligase.